A 522-amino-acid polypeptide reads, in one-letter code: 2-isopropylmalate synthase (522 aa).

A Pyruvate carboxyltransferase domain is found at 5–267 (VIIFDTTLRD…ETGINAKEIH (263 aa)). Residues D14, H202, H204, and N238 each coordinate Mn(2+). The interval 392 to 522 (QLQQLVVQSD…MQKNRELGGV (131 aa)) is regulatory domain.

The protein belongs to the alpha-IPM synthase/homocitrate synthase family. LeuA type 1 subfamily. In terms of assembly, homodimer. Mn(2+) serves as cofactor.

It is found in the cytoplasm. The enzyme catalyses 3-methyl-2-oxobutanoate + acetyl-CoA + H2O = (2S)-2-isopropylmalate + CoA + H(+). It participates in amino-acid biosynthesis; L-leucine biosynthesis; L-leucine from 3-methyl-2-oxobutanoate: step 1/4. Its function is as follows. Catalyzes the condensation of the acetyl group of acetyl-CoA with 3-methyl-2-oxobutanoate (2-ketoisovalerate) to form 3-carboxy-3-hydroxy-4-methylpentanoate (2-isopropylmalate). The sequence is that of 2-isopropylmalate synthase from Shewanella baltica (strain OS195).